The sequence spans 94 residues: Protein EGG APPARATUS-1 (94 aa).

Residues 1-15 (MSSCPAIVNMKDDDG) are Cytoplasmic-facing. A helical; Signal-anchor for type II membrane protein transmembrane segment spans residues 16 to 36 (IGAMGAAVAFAAMGVFGIYFL). At 37–94 (WPVVGPTSAGMMMKAPGAAGWVICRAVFEANPQLYFTILRTAGAAAAAATFAACSIAS) the chain is on the extracellular side.

Possible proteolysis of the C-terminal region from the predicted transmembrane domain to permit secretion and transport of the mature protein to the cell walls of the nucellus, allowing the spreading from the egg cell apparatus to the micropylar opening of the ovule. Expressed only in the egg apparatus, consisting of the egg cell and two synergids. Not detected in the central cell, antipodals, and nucellar and integumental cells.

It is found in the membrane. Its function is as follows. Involved in short-range signaling required for pollen tube attraction by the female gametophyte. Required for female fertility. This Zea mays (Maize) protein is Protein EGG APPARATUS-1 (Ea1).